A 637-amino-acid chain; its full sequence is Threonine--tRNA ligase (637 aa).

Residues 1 to 61 (MPVITLPDGS…DKDAELAIVT (61 aa)) form the TGS domain. Residues 242-533 (DHRKIGKKLG…LIEHYEGAFP (292 aa)) are catalytic. Zn(2+) is bound by residues C333, H384, and H510.

This sequence belongs to the class-II aminoacyl-tRNA synthetase family. As to quaternary structure, homodimer. Zn(2+) serves as cofactor.

Its subcellular location is the cytoplasm. The catalysed reaction is tRNA(Thr) + L-threonine + ATP = L-threonyl-tRNA(Thr) + AMP + diphosphate + H(+). Catalyzes the attachment of threonine to tRNA(Thr) in a two-step reaction: L-threonine is first activated by ATP to form Thr-AMP and then transferred to the acceptor end of tRNA(Thr). Also edits incorrectly charged L-seryl-tRNA(Thr). The sequence is that of Threonine--tRNA ligase from Hahella chejuensis (strain KCTC 2396).